The primary structure comprises 117 residues: Transcription elongation factor SPT4-B (117 aa).

Residues 1–40 (MALETVPKDLRHLRACLLCSLVKTIDQFEYDGCDNCDAYL) form an interaction with SUPT5H region. The C4-type zinc-finger motif lies at 16-36 (CLLCSLVKTIDQFEYDGCDNC).

The protein belongs to the SPT4 family. Interacts with SUPT5H to form DSIF. DSIF interacts with the positive transcription elongation factor b complex (P-TEFb complex), which is composed of CDK9 and cyclin-T (CCNT1 or CCNT2). DSIF interacts with RNA polymerase II, and this interaction is reduced by phosphorylation of the C-terminal domain (CTD) of POLR2A by P-TEFb. DSIF also interacts with the NELF complex, which is composed of WHSC2/NELFA, COBRA1/NELFB, TH1L/NELFD and RDBP/NELFE, and this interaction occurs following prior binding of DSIF to RNA polymerase II. DSIF also interacts with HRMT1L2/PRMT1, HTATSF1/TATSF1, RNGTT/CAP1A, SKB1/PRMT5, SUPT6H, and can interact with PIN1. Ubiquitinated by Ubr5 when not assembled in the DSIF complex, leading to its degradation: Ubr5 recognizes and binds a degron that is not accessible when Supt4h1b is part of the DSIF complex. As to expression, expressed in brain, heart and liver.

It is found in the nucleus. Component of the DRB sensitivity-inducing factor complex (DSIF complex), which regulates mRNA processing and transcription elongation by RNA polymerase II. DSIF positively regulates mRNA capping by stimulating the mRNA guanylyltransferase activity of RNGTT/CAP1A. DSIF also acts cooperatively with the negative elongation factor complex (NELF complex) to enhance transcriptional pausing at sites proximal to the promoter. Transcriptional pausing may facilitate the assembly of an elongation competent RNA polymerase II complex. DSIF and NELF promote pausing by inhibition of the transcription elongation factor TFIIS/S-II. TFIIS/S-II binds to RNA polymerase II at transcription pause sites and stimulates the weak intrinsic nuclease activity of the enzyme. Cleavage of blocked transcripts by RNA polymerase II promotes the resumption of transcription from the new 3' terminus and may allow repeated attempts at transcription through natural pause sites. In Mus musculus (Mouse), this protein is Transcription elongation factor SPT4-B (Supt4h1b).